Here is a 374-residue protein sequence, read N- to C-terminus: P2Y purinoceptor 11 (374 aa).

The Extracellular portion of the chain corresponds to 1–29; sequence MAANVSGAKSCPANFLAAADDKLSGFQGD. Asparagine 4 carries an N-linked (GlcNAc...) asparagine glycan. A helical membrane pass occupies residues 30–50; the sequence is FLWPILVVEFLVAVASNGLAL. Residues 51 to 64 are Cytoplasmic-facing; the sequence is YRFSIRKQRPWHPA. The helical transmembrane segment at 65–85 threads the bilayer; sequence VVFSVQLAVSDLLCALTLPPL. The Extracellular portion of the chain corresponds to 86–116; that stretch reads AAYLYPPKHWRYGEAACRLERFLFTCNLLGS. Cysteine 102 and cysteine 180 form a disulfide bridge. A helical transmembrane segment spans residues 117 to 137; the sequence is VIFITCISLNRYLGIVHPFFA. Topologically, residues 138 to 146 are cytoplasmic; sequence RSHLRPKHA. Residues 147–167 form a helical membrane-spanning segment; that stretch reads WAVSAAGWVLAALLAMPTLSF. The Extracellular segment spans residues 168 to 206; that stretch reads SHLKRPQQGAGNCSVARPEACIKCLGTADHGLAAYRAYS. The N-linked (GlcNAc...) asparagine glycan is linked to asparagine 179. A helical membrane pass occupies residues 207 to 227; the sequence is LVLAGLGCGLPLLLTLAAYGA. The Cytoplasmic segment spans residues 228-245; that stretch reads LGRAVLRSPGMTVAEKLR. A helical membrane pass occupies residues 246–266; the sequence is VAALVASGVALYASSYVPYHI. Over 267–308 the chain is Extracellular; it reads MRVLNVDARRRWSTRCPSFADIAQATAALELGPYVGYQVMRG. The helical transmembrane segment at 309 to 329 threads the bilayer; it reads LMPLAFCVHPLLYMAAVPSLG. Residues 330–374 are Cytoplasmic-facing; that stretch reads CCCRHCPGYRDSWNPEDAKSTGQALPLNATAAPKPSEPQSRELSQ. The tract at residues 345–374 is disordered; that stretch reads EDAKSTGQALPLNATAAPKPSEPQSRELSQ.

This sequence belongs to the G-protein coupled receptor 1 family. In terms of tissue distribution, highest expression in liver and spleen.

The protein localises to the cell membrane. Functionally, receptor for ATP and ADP coupled to G-proteins that activate both phosphatidylinositol-calcium and adenylyl cyclase second messenger systems. Not activated by UTP or UDP. In Homo sapiens (Human), this protein is P2Y purinoceptor 11 (P2RY11).